We begin with the raw amino-acid sequence, 272 residues long: PHD finger protein ALFIN-LIKE 6 (272 aa).

The span at 1–23 shows a compositional bias: gly residues; that stretch reads MEGGGGGGGGGGGGGGGGGGGGA. Disordered stretches follow at residues 1-24 and 162-218; these read MEGG…GGAP and QAKE…DNTL. Positions 168-182 are enriched in low complexity; the sequence is PNSSSKSNKPSSKVQ. The span at 183–200 shows a compositional bias: basic and acidic residues; sequence SKAESRSKSKLSAPKDEE. Residues 201 to 214 are compositionally biased toward acidic residues; that stretch reads GSGDDEGEEEEDDH. The PHD-type zinc-finger motif lies at 216–268; it reads NTLCGTCGTNDGKDEFWICCDNCEKWYHGKCVKITPARAEHIKQYKCPDCTNK.

The protein belongs to the Alfin family.

Its subcellular location is the nucleus. Histone-binding component that specifically recognizes H3 tails trimethylated on 'Lys-4' (H3K4me3), which mark transcription start sites of virtually all active genes. This is PHD finger protein ALFIN-LIKE 6 from Oryza sativa subsp. indica (Rice).